Consider the following 362-residue polypeptide: MAQVFNFSSGPAMLPTEVLKLAQQELRDWHDLGTSVMEISHRGKEFIQVAEEAEQDFRDLLSIPSNYKVLFCHGGGRGQFAGVPLNLLGDRTTADYVDAGYWAASAIKEAKKYCAPQIIDAKITVDGKRAVKPMREWQLSDNAAYLHYCPNETIDGIAIDETPDFGPGVVVTADFSSTILSAPLDVSRYGVIYAGAQKNIGPAGLTLVIVREDLLGKAHENCPSILDYTVLNDNDSMFNTPPTFAWYLSGLVFKWLKAQGGVAAMHKINQQKAQLLYGVIDNSDFYRNDVAQANRSRMNVPFQLADNALDKVFLEESFAAGLHALKGHRVVGGMRASIYNAMPIEGVKALTDFMIDFERRHG.

2 residues coordinate L-glutamate: serine 9 and arginine 42. Residues 76 to 77 (GR), tryptophan 102, threonine 153, aspartate 174, and glutamine 197 each bind pyridoxal 5'-phosphate. Lysine 198 carries the post-translational modification N6-(pyridoxal phosphate)lysine. Position 239-240 (239-240 (NT)) interacts with pyridoxal 5'-phosphate.

The protein belongs to the class-V pyridoxal-phosphate-dependent aminotransferase family. SerC subfamily. As to quaternary structure, homodimer. It depends on pyridoxal 5'-phosphate as a cofactor.

The protein resides in the cytoplasm. The enzyme catalyses O-phospho-L-serine + 2-oxoglutarate = 3-phosphooxypyruvate + L-glutamate. It carries out the reaction 4-(phosphooxy)-L-threonine + 2-oxoglutarate = (R)-3-hydroxy-2-oxo-4-phosphooxybutanoate + L-glutamate. It functions in the pathway amino-acid biosynthesis; L-serine biosynthesis; L-serine from 3-phospho-D-glycerate: step 2/3. It participates in cofactor biosynthesis; pyridoxine 5'-phosphate biosynthesis; pyridoxine 5'-phosphate from D-erythrose 4-phosphate: step 3/5. Catalyzes the reversible conversion of 3-phosphohydroxypyruvate to phosphoserine and of 3-hydroxy-2-oxo-4-phosphonooxybutanoate to phosphohydroxythreonine. The polypeptide is Phosphoserine aminotransferase (Salmonella arizonae (strain ATCC BAA-731 / CDC346-86 / RSK2980)).